The primary structure comprises 386 residues: Cytotoxic granule associated RNA binding protein TIA1 (386 aa).

Met1 carries the post-translational modification N-acetylmethionine. 3 RRM domains span residues 7–83 (KTLY…WATT), 106–184 (FHVF…WATR), and 214–286 (CTVY…WGKE). Positions 355–376 (GPNYSVPPPQGQNGSMLPSQPA) are disordered.

As to quaternary structure, homooligomer; homooligomerization is induced by Zn(2+). Interacts with FASTK; the interactions leads to its phosphorylation. Interacts (via RRM1 and the C-terminal glutamine-rich (Q) sequence) with SNRPC/U1-C (via N-terminus); thereby facilitating spliceosomal U1 snRNP recruitment to 5' splice sites. Phosphorylatedby FASTK; phosphorylation occurs after FAS ligation in FAS-mediated apoptosis and before DNA fragmentation.

The protein resides in the nucleus. It localises to the cytoplasm. The protein localises to the stress granule. Functionally, RNA-binding protein involved in the regulation of alternative pre-RNA splicing and mRNA translation by binding to uridine-rich (U-rich) RNA sequences. Binds to U-rich sequences immediately downstream from a 5' splice sites in a uridine-rich small nuclear ribonucleoprotein (U snRNP)-dependent fashion, thereby modulating alternative pre-RNA splicing. Preferably binds to the U-rich IAS1 sequence in a U1 snRNP-dependent manner; this binding is optimal if a 5' splice site is adjacent to IAS1. Activates the use of heterologous 5' splice sites; the activation depends on the intron sequence downstream from the 5' splice site, with a preference for a downstream U-rich sequence. By interacting with SNRPC/U1-C, promotes recruitment and binding of spliceosomal U1 snRNP to 5' splice sites followed by U-rich sequences, thereby facilitating atypical 5' splice site recognition by U1 snRNP. Activates splicing of alternative exons with weak 5' splice sites followed by a U-rich stretch on its own pre-mRNA and on TIAR mRNA. Acts as a modulator of alternative splicing for the apoptotic FAS receptor, thereby promoting apoptosis. Binds to the 5' splice site region of FAS intron 5 to promote accumulation of transcripts that include exon 6 at the expense of transcripts in which exon 6 is skipped, thereby leading to the transcription of a membrane-bound apoptotic FAS receptor, which promotes apoptosis. Binds to a conserved AU-rich cis element in COL2A1 intron 2 and modulates alternative splicing of COL2A1 exon 2. Also binds to the equivalent AT-rich element in COL2A1 genomic DNA, and may thereby be involved in the regulation of transcription. Involved in the repression of mRNA translation by binding to AU-rich elements (AREs) located in mRNA 3' untranslated regions (3' UTRs), including target ARE-bearing mRNAs encoding TNF and PTGS2. Also participates in the cellular response to environmental stress, by acting downstream of the stress-induced phosphorylation of EIF2S1/EIF2A to promote the recruitment of untranslated mRNAs to cytoplasmic stress granules (SGs), leading to stress-induced translational arrest. Formation and recruitment to SGs is regulated by Zn(2+). Possesses nucleolytic activity against cytotoxic lymphocyte target cells. The polypeptide is Cytotoxic granule associated RNA binding protein TIA1 (Tia1) (Mus musculus (Mouse)).